Here is a 242-residue protein sequence, read N- to C-terminus: Carbendazim hydrolyzing esterase (242 aa).

The active-site Acyl-ester intermediate is serine 77.

It belongs to the AB hydrolase superfamily.

Its subcellular location is the secreted. It catalyses the reaction carbendazim + H2O = 2-aminobenzimidazole + methanol + CO2. The catalysed reaction is carbendazim + H2O = N-(1H-1,3-benzodiazol-2-yl)carbamate + methanol + H(+). It carries out the reaction N-(1H-1,3-benzodiazol-2-yl)carbamate + H(+) = 2-aminobenzimidazole + CO2. Catalyzes the hydrolysis of the fungicide carbendazim (methyl-1H-benzimidazol-2-ylcarbamate or MBC) to 2-aminobenzimidazole (2-AB). Following hydrolysis of the carbamate ester, the carbamate decarboxylates spontaneously. Can hydrolyze model carboxylesters such as methyl salicylate, alpha-naphthyl acetate and p-nitrophenyl acetate. In addition, shows substantial hydrolytic activity in vitro against widespread pollutants with carboxylester, carbamate and amide linkages, such as dimethyl phthalate, propanil and chlorpropham. The protein is Carbendazim hydrolyzing esterase of Nocardioides sp. (strain SG-4G).